The sequence spans 234 residues: NAD-dependent protein deacetylase (234 aa).

The region spanning 1–234 (MSDITAAQTT…AVDFFEGVQV (234 aa)) is the Deacetylase sirtuin-type domain. NAD(+) contacts are provided by Ala-23, Thr-27, Arg-35, Gln-99, Ile-101, Asp-102, His-117, Thr-184, Ser-185, Asn-208, and Val-226. Ile-101 and Asp-102 together coordinate nicotinamide. The active-site Proton acceptor is His-117.

It belongs to the sirtuin family. Class U subfamily.

The protein resides in the cytoplasm. It catalyses the reaction N(6)-acetyl-L-lysyl-[protein] + NAD(+) + H2O = 2''-O-acetyl-ADP-D-ribose + nicotinamide + L-lysyl-[protein]. NAD-dependent protein deacetylase which modulates the activities of several enzymes which are inactive in their acetylated form. The sequence is that of NAD-dependent protein deacetylase from Lactiplantibacillus plantarum (strain ATCC BAA-793 / NCIMB 8826 / WCFS1) (Lactobacillus plantarum).